Here is a 189-residue protein sequence, read N- to C-terminus: Crossover junction endodeoxyribonuclease RuvC (189 aa).

Catalysis depends on residues Asp-7, Glu-68, and Asp-141. Mg(2+) is bound by residues Asp-7, Glu-68, and Asp-141.

This sequence belongs to the RuvC family. In terms of assembly, homodimer which binds Holliday junction (HJ) DNA. The HJ becomes 2-fold symmetrical on binding to RuvC with unstacked arms; it has a different conformation from HJ DNA in complex with RuvA. In the full resolvosome a probable DNA-RuvA(4)-RuvB(12)-RuvC(2) complex forms which resolves the HJ. The cofactor is Mg(2+).

It localises to the cytoplasm. It catalyses the reaction Endonucleolytic cleavage at a junction such as a reciprocal single-stranded crossover between two homologous DNA duplexes (Holliday junction).. Its function is as follows. The RuvA-RuvB-RuvC complex processes Holliday junction (HJ) DNA during genetic recombination and DNA repair. Endonuclease that resolves HJ intermediates. Cleaves cruciform DNA by making single-stranded nicks across the HJ at symmetrical positions within the homologous arms, yielding a 5'-phosphate and a 3'-hydroxyl group; requires a central core of homology in the junction. The consensus cleavage sequence is 5'-(A/T)TT(C/G)-3'. Cleavage occurs on the 3'-side of the TT dinucleotide at the point of strand exchange. HJ branch migration catalyzed by RuvA-RuvB allows RuvC to scan DNA until it finds its consensus sequence, where it cleaves and resolves the cruciform DNA. The polypeptide is Crossover junction endodeoxyribonuclease RuvC (Chlorobium phaeovibrioides (strain DSM 265 / 1930) (Prosthecochloris vibrioformis (strain DSM 265))).